A 55-amino-acid polypeptide reads, in one-letter code: Conotoxin Cal6.40 (55 aa).

Residues 1 to 21 (MSGSGVLLLTLLLLVPLSALA) form the signal peptide. Disulfide bonds link Cys24–Cys36, Cys29–Cys41, and Cys35–Cys50.

In terms of tissue distribution, expressed by the venom duct.

It localises to the secreted. In terms of biological role, probable neurotoxin. This chain is Conotoxin Cal6.40, found in Californiconus californicus (California cone).